The chain runs to 189 residues: Ribulose bisphosphate carboxylase small subunit, chloroplastic (189 aa).

Residues 1–66 constitute a chloroplast transit peptide; it reads MASSIMALSS…KTTSNGSRVR (66 aa).

Belongs to the RuBisCO small chain family. As to quaternary structure, heterohexadecamer of 8 large and 8 small subunits.

Its subcellular location is the plastid. It is found in the chloroplast. In terms of biological role, ruBisCO catalyzes two reactions: the carboxylation of D-ribulose 1,5-bisphosphate, the primary event in carbon dioxide fixation, as well as the oxidative fragmentation of the pentose substrate. Both reactions occur simultaneously and in competition at the same active site. Although the small subunit is not catalytic it is essential for maximal activity. This is Ribulose bisphosphate carboxylase small subunit, chloroplastic from Larix laricina (Tamarack).